The sequence spans 313 residues: Olfactory receptor 8C8 (313 aa).

Topologically, residues 1 to 27 are extracellular; that stretch reads MMQITMENKSSVSEFILMGLTDQPELQ. N-linked (GlcNAc...) asparagine glycosylation occurs at N8. Residues 28 to 48 form a helical membrane-spanning segment; that stretch reads LPLFVLFLMNYTATVMGNLTL. The Cytoplasmic portion of the chain corresponds to 49–59; sequence MNLICLNSNLH. A helical membrane pass occupies residues 60 to 80; the sequence is TPMYFFLFNLSFIDFCYSMVF. Residues 81 to 96 lie on the Extracellular side of the membrane; the sequence is TPKMLMSFILEKNTIS. A helical transmembrane segment spans residues 97–117; sequence FGGCMAQLFFFLFFVNSESYV. C100 and C192 are oxidised to a cystine. At 118–136 the chain is on the cytoplasmic side; the sequence is LTAMAYDRYVAICKPLTYK. The chain crosses the membrane as a helical span at residues 137–157; sequence VIMSPKICCLLIFSSYLMGFA. At 158-208 the chain is on the extracellular side; the sequence is SAMAHTGCMIRLSFCDSNIINHYMCDIFPLLPLSCSSTYVNELMSSVVVGS. The helical transmembrane segment at 209–229 threads the bilayer; that stretch reads AIILCCLIILISYAMILFNII. Topologically, residues 230–239 are cytoplasmic; sequence HMSSGKGWSK. The helical transmembrane segment at 240 to 260 threads the bilayer; sequence ALGTCGSHIITVSLFYGSGLL. At 261 to 274 the chain is on the extracellular side; that stretch reads AYVKPSSAKTVGQG. Residues 275 to 295 traverse the membrane as a helical segment; the sequence is KFFSVFYTLLVPMLNPLIYSL. Residues 296 to 313 are Cytoplasmic-facing; sequence RNKDVKLAVKKTWKRITS.

This sequence belongs to the G-protein coupled receptor 1 family. As to expression, expressed in neurons in the olfactory epithelium.

The protein localises to the cell membrane. In terms of biological role, potential odorant receptor. This chain is Olfactory receptor 8C8, found in Mus musculus (Mouse).